The following is a 203-amino-acid chain: MSRYTGPSWKQSRRLGLSLTGTGKELARRNYVPGQHGPNNRSKLSEYGLQLAEKQKLRFSYGLGEKQFRNLFVQATKIKEGTLGFNFMVLLERRLDNVVYRLGLATTRRQARQFVNHGHILVDGKRVDIPSYRVDPGQVISVREKSMKVPAILEAVEATLGRPAFVSFDAEKLEGSLTRLPERDEINPEINEALVVEFYNKML.

The region spanning 93-156 (RRLDNVVYRL…MKVPAILEAV (64 aa)) is the S4 RNA-binding domain.

This sequence belongs to the universal ribosomal protein uS4 family. In terms of assembly, part of the 30S ribosomal subunit. Contacts protein S5. The interaction surface between S4 and S5 is involved in control of translational fidelity.

In terms of biological role, one of the primary rRNA binding proteins, it binds directly to 16S rRNA where it nucleates assembly of the body of the 30S subunit. With S5 and S12 plays an important role in translational accuracy. This Streptococcus pyogenes serotype M1 protein is Small ribosomal subunit protein uS4.